Here is a 72-residue protein sequence, read N- to C-terminus: UPF0154 protein YneF (72 aa).

The helical transmembrane segment at Trp4–Ile24 threads the bilayer.

The protein belongs to the UPF0154 family.

The protein localises to the membrane. The sequence is that of UPF0154 protein YneF (yneF) from Bacillus subtilis (strain 168).